A 344-amino-acid polypeptide reads, in one-letter code: Signal peptide peptidase (344 aa).

Residues 1 to 11 (MKNCERFANLA) lie on the Lumenal side of the membrane. A helical transmembrane segment spans residues 12–32 (LAGLTLAPLVVRVNPNLNVIL). At 33–62 (TACITVYVGCFRSVKDTPPTETMSKEHAMR) the chain is on the cytoplasmic side. A helical membrane pass occupies residues 63–83 (FPLVGSAMLLSLFLLFKFLSK). The Lumenal portion of the chain corresponds to 84–89 (DLVNAV). The helical transmembrane segment at 90-110 (LTAYFFVLGIVALSATLLPAI) threads the bilayer. Over 111–136 (RRFLPNPWNDNLIVWRFPYFKSLEVE) the chain is Cytoplasmic. Residues 137 to 157 (FTKSQVVAGIPGTFFCAWYAW) form a helical membrane-spanning segment. Topologically, residues 158-160 (KKH) are lumenal. Residues 161 to 181 (WLANNILGLSFCIQGIEMLSL) form a helical membrane-spanning segment. Residues 182-188 (GSFKTGA) lie on the Cytoplasmic side of the membrane. A helical transmembrane segment spans residues 189 to 209 (ILLAGLFFYDIFWVFFTPVMV). D198 is a catalytic residue. The Lumenal segment spans residues 210 to 230 (SVAKSFDAPIKLLFPTGDALR). A helical transmembrane segment spans residues 231 to 251 (PYSMLGLGDIVIPGIFVALAL). The active site involves D239. Topologically, residues 252 to 263 (RFDVSRRRQPQY) are cytoplasmic. A helical membrane pass occupies residues 264–284 (FTSAFIGYAVGVILTIVVMNW). Topologically, residues 285–290 (FQAAQP) are lumenal. Positions 290–292 (PAL) match the PAL motif. A helical membrane pass occupies residues 291–311 (ALLYIVPAVIGFLASHCIWNG). The Cytoplasmic segment spans residues 312–344 (DIKPLLAFDESKTEEATTDESKTSEEVNKAHDE). The interval 323 to 344 (KTEEATTDESKTSEEVNKAHDE) is disordered.

Belongs to the peptidase A22B family. In terms of tissue distribution, ubiquitous with the highest expression in emerging leaves, roots, and floral tissues (at the protein level). Highly detected in pollen.

It localises to the endoplasmic reticulum membrane. Intramembrane-cleaving aspartic protease (I-CLiP) that cleaves type II membrane signal peptides in the hydrophobic plane of the membrane. Catalyzes intramembrane proteolysis of some signal peptides after they have been cleaved from a preprotein, resulting in the release of the fragment from the ER membrane into the cytoplasm. Plays a critical role in the development and function of the reproductive tissues, especially in pollen development. This chain is Signal peptide peptidase (SPP), found in Arabidopsis thaliana (Mouse-ear cress).